We begin with the raw amino-acid sequence, 496 residues long: Glycogen synthase (496 aa).

Residue K15 participates in ADP-alpha-D-glucose binding.

Belongs to the glycosyltransferase 1 family. Bacterial/plant glycogen synthase subfamily.

It carries out the reaction [(1-&gt;4)-alpha-D-glucosyl](n) + ADP-alpha-D-glucose = [(1-&gt;4)-alpha-D-glucosyl](n+1) + ADP + H(+). Its pathway is glycan biosynthesis; glycogen biosynthesis. Synthesizes alpha-1,4-glucan chains using ADP-glucose. The chain is Glycogen synthase from Natranaerobius thermophilus (strain ATCC BAA-1301 / DSM 18059 / JW/NM-WN-LF).